A 578-amino-acid polypeptide reads, in one-letter code: Oxygen sensor histidine kinase response regulator DevS/DosS (578 aa).

2 consecutive GAF domains span residues 63-200 and 231-369; these read DLEA…GIAV and EPAT…ALAW. Position 149 (His149) interacts with heme. The region spanning 383-578 is the Histidine kinase domain; sequence VLTDRDRIAR…VLRWSAPLSQ (196 aa). Position 395 is a phosphohistidine; by autocatalysis (His395).

The cofactor is Mg(2+). It depends on heme as a cofactor.

It localises to the cytoplasm. The catalysed reaction is ATP + protein L-histidine = ADP + protein N-phospho-L-histidine.. In terms of biological role, member of the two-component regulatory system DevR/DevS (DosR/DosS) involved in onset of the dormancy response. Regulates an approximately 48-member regulon. Required for full induction of the DevR (DosR) regulon; acts later than DosT to positively regulate expression of the DevR regulon during adaptation to anaerobiosis. Characterized as an oxygen sensor; O(2) acts as a switch, with O(2)-bound Fe(2+) protein inactive in autophosphorylation. Has also been suggested to act as a redox sensor, or perhaps as a dual oxygen/redox sensor. Donates a phosphate group to transcriptional regulator DevR (DosR). The chain is Oxygen sensor histidine kinase response regulator DevS/DosS (devS) from Mycobacterium tuberculosis (strain CDC 1551 / Oshkosh).